The sequence spans 158 residues: Nascent polypeptide-associated complex subunit beta (158 aa).

2 disordered regions span residues 1-40 (MDQAKLARLQQSVRIGKGKGTPRRKTKKVHKSSGTDDKKL) and 119-158 (ESYQSMQKGEGGEDAKKDDDDDDDEIPDLVEGENFESKVE). Residues 16 to 31 (GKGKGTPRRKTKKVHK) show a composition bias toward basic residues. An NAC-A/B domain is found at 34–99 (GTDDKKLQTS…GEDKELTELV (66 aa)). Residues 137-152 (DDDDDDEIPDLVEGEN) are compositionally biased toward acidic residues.

This sequence belongs to the NAC-beta family. As to quaternary structure, part of the nascent polypeptide-associated complex (NAC), consisting of EGD2 and EGD1. NAC associates with ribosomes via EGD1.

It is found in the cytoplasm. The protein localises to the nucleus. Functionally, component of the nascent polypeptide-associated complex (NAC), a dynamic component of the ribosomal exit tunnel, protecting the emerging polypeptides from interaction with other cytoplasmic proteins to ensure appropriate nascent protein targeting. The NAC complex also promotes mitochondrial protein import by enhancing productive ribosome interactions with the outer mitochondrial membrane and blocks the inappropriate interaction of ribosomes translating non-secretory nascent polypeptides with translocation sites in the membrane of the endoplasmic reticulum. EGD1 may act as a transcription factor that exert a negative effect on the expression of several genes that are transcribed by RNA polymerase II. This chain is Nascent polypeptide-associated complex subunit beta (EGD1), found in Ajellomyces capsulatus (strain NAm1 / WU24) (Darling's disease fungus).